A 1093-amino-acid chain; its full sequence is MKLLYTDIRHSLTKVLVAEAESLVAAGKRVFYIAPNSLSFEKERSVLECLKTQASFAITVTRFAQMARYFVLNDVRQGQSLDDIGLGMLIYRTLTELDDGELKVYSRIKKDPQFIQQLMDLYHELQTAQMSFADLEFLEEPEKREDLVKIFTAVTAALNKGDFDSSSQIAAFAQHILAGDTDEELADLALVIDGFTRFSAEEEYLVGLLHRKGVEIVIGTYASQKAYRAAFREGNLYQASVDFLRKLAEDYQVKPDYIPHAEAEDAFGRISKILESRYDFSESTVSLSESDRSQLQIWATMNQKEELEYVAKSIRQRVHEGVRYKDIRLLLGDVEAYQLQLKTIFDQYQIPYYLGRSESMAQHPLVQFVESLERLKRYNFQLEDLLNLLKTGLYGDLTQEELDHFEQYLRFADIKGAGKLAKDFTANSQGKFDLDCLNHIRRRVMTPLQDFFKSRSQTASGLLAKFTEFVQAARLSDNLTALLQGESQQEQERHEEVWKAFSHVLEQFAQVFADSKVKLDDFLALVLSGMLLSNYRTVPATVDVVKVQSYDLIEPLAAPYVYAIGLTQERFPKIAQNKSLLSDEDRARLNDATDSQAELQIASSENLKKNRYTALSLMNSATKELVLSAPALVNEVEDSMSTYLLELTAAPLSLPIIVKKPQASSDDIGSYRALLSQIIELHQEEIDREWTAEEQTFWAVAVRVLRKKLAAEGISIPHISKELKTETLQSETLQALYPQEQPLRLSASALNEYFRHQYAYFLKYVLRLQEEWTIHPDARSHGIFLHRIFEKVLQDDSSADFDRRLAQAMEETSREAEFESIYSESGQTRFARQLLLDTARATGRVLAHPSGIETIGEETGFGSASTPFLTLENGRAVTVSGKVDRIDRLTKTESLGVVDYKSGDIKFSFEKFFNGLNSQLPTYLAAIEELADYQEDKGTFGAMYLQMTDPIVALKDTKTLADAVSQSMKPLQYKGLFVADAVKELGPLYEKNKTNLLSQEDLDLLLAYNAYLYKKAAEGILSGHFAVNPYTENGRSIAPYVEQFKAITGFEANLHLGQARQLEKLDASKFDRRPTGDKLRQAWLEKMREEMEK.

It belongs to the helicase family. AddB/RexB type 2 subfamily. As to quaternary structure, heterodimer of AddA and RexB. It depends on Mg(2+) as a cofactor.

Functionally, the heterodimer acts as both an ATP-dependent DNA helicase and an ATP-dependent, dual-direction single-stranded exonuclease. Recognizes the chi site generating a DNA molecule suitable for the initiation of homologous recombination. This subunit has 5' -&gt; 3' nuclease activity but not helicase activity. The polypeptide is ATP-dependent helicase/deoxyribonuclease subunit B (Streptococcus sanguinis (strain SK36)).